The sequence spans 159 residues: MKITILTVGKLKEKYWKQAIAEYEKRLSAYSKIEIIEVPDEKAPENMSDKEVEQVKEKEGQRLLAKVKQQSTVITLEIKGNMLTSEGLAKEIESRMTRGQSDFTFIIGGSNGLHKDVLDRSDYALSFSKMTFPHQMMRVILIEQVYRAFKIMRGEAYHK.

S-adenosyl-L-methionine-binding positions include leucine 76, glycine 108, and 127 to 132 (FSKMTF).

Belongs to the RNA methyltransferase RlmH family. As to quaternary structure, homodimer.

It is found in the cytoplasm. The catalysed reaction is pseudouridine(1915) in 23S rRNA + S-adenosyl-L-methionine = N(3)-methylpseudouridine(1915) in 23S rRNA + S-adenosyl-L-homocysteine + H(+). Specifically methylates the pseudouridine at position 1915 (m3Psi1915) in 23S rRNA. This chain is Ribosomal RNA large subunit methyltransferase H, found in Staphylococcus saprophyticus subsp. saprophyticus (strain ATCC 15305 / DSM 20229 / NCIMB 8711 / NCTC 7292 / S-41).